The chain runs to 329 residues: 4-hydroxythreonine-4-phosphate dehydrogenase (329 aa).

Substrate contacts are provided by His-136 and Thr-137. His-166, His-211, and His-266 together coordinate a divalent metal cation. 3 residues coordinate substrate: Lys-274, Asn-283, and Arg-292.

This sequence belongs to the PdxA family. Homodimer. Zn(2+) serves as cofactor. Requires Mg(2+) as cofactor. Co(2+) is required as a cofactor.

It localises to the cytoplasm. The catalysed reaction is 4-(phosphooxy)-L-threonine + NAD(+) = 3-amino-2-oxopropyl phosphate + CO2 + NADH. Its pathway is cofactor biosynthesis; pyridoxine 5'-phosphate biosynthesis; pyridoxine 5'-phosphate from D-erythrose 4-phosphate: step 4/5. Its function is as follows. Catalyzes the NAD(P)-dependent oxidation of 4-(phosphooxy)-L-threonine (HTP) into 2-amino-3-oxo-4-(phosphooxy)butyric acid which spontaneously decarboxylates to form 3-amino-2-oxopropyl phosphate (AHAP). This Shigella boydii serotype 4 (strain Sb227) protein is 4-hydroxythreonine-4-phosphate dehydrogenase.